We begin with the raw amino-acid sequence, 242 residues long: Uridylate kinase (242 aa).

16–19 is an ATP binding site; sequence KISG. An involved in allosteric activation by GTP region spans residues 24–29; that stretch reads GDQGFG. Gly-58 contributes to the UMP binding site. Residues Gly-59 and Arg-63 each coordinate ATP. UMP contacts are provided by residues Asp-78 and 139–146; that span reads TGNPYFTT. Residues Thr-166, Tyr-172, and Asp-175 each contribute to the ATP site.

The protein belongs to the UMP kinase family. As to quaternary structure, homohexamer.

Its subcellular location is the cytoplasm. It carries out the reaction UMP + ATP = UDP + ADP. It participates in pyrimidine metabolism; CTP biosynthesis via de novo pathway; UDP from UMP (UMPK route): step 1/1. Its activity is regulated as follows. Allosterically activated by GTP. Inhibited by UTP. Catalyzes the reversible phosphorylation of UMP to UDP. The chain is Uridylate kinase from Roseobacter denitrificans (strain ATCC 33942 / OCh 114) (Erythrobacter sp. (strain OCh 114)).